Consider the following 162-residue polypeptide: Putative ankyrin repeat protein R664 (162 aa).

ANK repeat units lie at residues Lys10–Tyr40, Asn47–Tyr78, and Tyr82–Leu111.

The protein is Putative ankyrin repeat protein R664 of Acanthamoeba polyphaga mimivirus (APMV).